The chain runs to 115 residues: Transmembrane protein 218 (115 aa).

The next 3 helical transmembrane spans lie at 5–25 (VLGVGAGVFILALLWVAVLLL), 38–58 (FSVIFLFFGAVIITSVLLLFP), and 81–101 (YVLLAFLSAIFLGGLFLVLIH).

Belongs to the TMEM218 family. Interacts with TMEM67.

The protein resides in the membrane. It localises to the cell projection. Its subcellular location is the cilium. Its function is as follows. May be involved in ciliary biogenesis or function. This is Transmembrane protein 218 (TMEM218) from Homo sapiens (Human).